Reading from the N-terminus, the 266-residue chain is Putative peptidyl-prolyl cis-trans isomerase NifM (266 aa).

Residues Pro-124–Ala-221 form the PpiC domain.

This sequence belongs to the PpiC/parvulin rotamase family.

It carries out the reaction [protein]-peptidylproline (omega=180) = [protein]-peptidylproline (omega=0). Its function is as follows. Required for the activation and stabilization of the iron-component (NifH) of nitrogenase. Probable PPIase. The chain is Putative peptidyl-prolyl cis-trans isomerase NifM (nifM) from Klebsiella oxytoca.